A 156-amino-acid polypeptide reads, in one-letter code: Small ribosomal subunit protein uS7 (156 aa).

Belongs to the universal ribosomal protein uS7 family. In terms of assembly, part of the 30S ribosomal subunit. Contacts proteins S9 and S11.

Its function is as follows. One of the primary rRNA binding proteins, it binds directly to 16S rRNA where it nucleates assembly of the head domain of the 30S subunit. Is located at the subunit interface close to the decoding center, probably blocks exit of the E-site tRNA. The protein is Small ribosomal subunit protein uS7 of Streptococcus suis (strain 98HAH33).